An 88-amino-acid chain; its full sequence is Sec-independent protein translocase protein TatA (88 aa).

The chain crosses the membrane as a helical span at residues 1–21 (MGGISIWQLLIIAVIVVLLFG). Residues 41-88 (KAMGDENQKETNNAEKTTNDADFDTKNLAQKTSTEEKSTTESKNKEQV) form a disordered region. Composition is skewed to basic and acidic residues over residues 42-65 (AMGD…DFDT) and 73-88 (STEE…KEQV).

The protein belongs to the TatA/E family. In terms of assembly, the Tat system comprises two distinct complexes: a TatABC complex, containing multiple copies of TatA, TatB and TatC subunits, and a separate TatA complex, containing only TatA subunits. Substrates initially bind to the TatABC complex, which probably triggers association of the separate TatA complex to form the active translocon.

Its subcellular location is the cell inner membrane. Functionally, part of the twin-arginine translocation (Tat) system that transports large folded proteins containing a characteristic twin-arginine motif in their signal peptide across membranes. TatA could form the protein-conducting channel of the Tat system. The polypeptide is Sec-independent protein translocase protein TatA (Proteus mirabilis (strain HI4320)).